The chain runs to 505 residues: Maturase K (505 aa).

This sequence belongs to the intron maturase 2 family. MatK subfamily.

It localises to the plastid. The protein localises to the chloroplast. Usually encoded in the trnK tRNA gene intron. Probably assists in splicing its own and other chloroplast group II introns. This chain is Maturase K, found in Froelichia floridana (Florida snake-cotton).